We begin with the raw amino-acid sequence, 469 residues long: Phenylalanine--tRNA ligase alpha subunit (469 aa).

L-phenylalanine is bound by residues Thr-309, 348-350 (QLD), and Phe-388. Glu-390 is a Mg(2+) binding site.

It belongs to the class-II aminoacyl-tRNA synthetase family. Phe-tRNA synthetase alpha subunit type 2 subfamily. As to quaternary structure, tetramer of two alpha and two beta subunits. Mg(2+) is required as a cofactor.

The protein resides in the cytoplasm. The enzyme catalyses tRNA(Phe) + L-phenylalanine + ATP = L-phenylalanyl-tRNA(Phe) + AMP + diphosphate + H(+). In Sulfurisphaera tokodaii (strain DSM 16993 / JCM 10545 / NBRC 100140 / 7) (Sulfolobus tokodaii), this protein is Phenylalanine--tRNA ligase alpha subunit.